The sequence spans 366 residues: tRNA N6-adenosine threonylcarbamoyltransferase (366 aa).

Residues histidine 130, histidine 134, and tyrosine 151 each contribute to the a divalent metal cation site. Residues 151–155, aspartate 183, glycine 198, glutamate 202, and asparagine 297 each bind substrate; that span reads YVSGG. An a divalent metal cation-binding site is contributed by aspartate 325.

It belongs to the KAE1 / TsaD family. In terms of assembly, component of the EKC/KEOPS complex composed of at least BUD32, CGI121, GON7, KAE1 and PCC1; the whole complex dimerizes. Requires a divalent metal cation as cofactor.

The protein localises to the cytoplasm. The protein resides in the nucleus. It carries out the reaction L-threonylcarbamoyladenylate + adenosine(37) in tRNA = N(6)-L-threonylcarbamoyladenosine(37) in tRNA + AMP + H(+). Functionally, component of the EKC/KEOPS complex that is required for the formation of a threonylcarbamoyl group on adenosine at position 37 (t(6)A37) in tRNAs that read codons beginning with adenine. The complex is probably involved in the transfer of the threonylcarbamoyl moiety of threonylcarbamoyl-AMP (TC-AMP) to the N6 group of A37. KAE1 likely plays a direct catalytic role in this reaction, but requires other protein(s) of the complex to fulfill this activity. The EKC/KEOPS complex also promotes both telomere uncapping and telomere elongation. The complex is required for efficient recruitment of transcriptional coactivators. The polypeptide is tRNA N6-adenosine threonylcarbamoyltransferase (Cryptococcus neoformans var. neoformans serotype D (strain JEC21 / ATCC MYA-565) (Filobasidiella neoformans)).